Reading from the N-terminus, the 92-residue chain is UPF0223 protein Sez_0908 (92 aa).

The protein belongs to the UPF0223 family.

This Streptococcus equi subsp. zooepidemicus (strain MGCS10565) protein is UPF0223 protein Sez_0908.